The primary structure comprises 385 residues: uncharacterized protein (385 aa).

Belongs to the peptidase M20 family.

This is an uncharacterized protein from Staphylococcus saprophyticus subsp. saprophyticus (strain ATCC 15305 / DSM 20229 / NCIMB 8711 / NCTC 7292 / S-41).